A 211-amino-acid chain; its full sequence is Mediator of RNA polymerase II transcription subunit 18 (211 aa).

This sequence belongs to the Mediator complex subunit 18 family. Component of the Mediator complex.

The protein resides in the nucleus. Functionally, component of the Mediator complex, a coactivator involved in the regulated transcription of nearly all RNA polymerase II-dependent genes. Mediator functions as a bridge to convey information from gene-specific regulatory proteins to the basal RNA polymerase II transcription machinery. Mediator is recruited to promoters by direct interactions with regulatory proteins and serves as a scaffold for the assembly of a functional preinitiation complex with RNA polymerase II and the general transcription factors. The polypeptide is Mediator of RNA polymerase II transcription subunit 18 (MED18) (Anopheles gambiae (African malaria mosquito)).